The sequence spans 122 residues: Large ribosomal subunit protein uL14 (122 aa).

This sequence belongs to the universal ribosomal protein uL14 family. Part of the 50S ribosomal subunit. Forms a cluster with proteins L3 and L19. In the 70S ribosome, L14 and L19 interact and together make contacts with the 16S rRNA in bridges B5 and B8.

Binds to 23S rRNA. Forms part of two intersubunit bridges in the 70S ribosome. This chain is Large ribosomal subunit protein uL14, found in Shewanella woodyi (strain ATCC 51908 / MS32).